The following is a 44-amino-acid chain: Photosystem I reaction center subunit IX (44 aa).

The chain crosses the membrane as a helical span at residues 7 to 27 (YLSTAPVLATLWFGSLAGLLI).

It belongs to the PsaJ family.

It is found in the plastid. The protein resides in the chloroplast thylakoid membrane. Its function is as follows. May help in the organization of the PsaE and PsaF subunits. This chain is Photosystem I reaction center subunit IX, found in Calycanthus floridus var. glaucus (Eastern sweetshrub).